Here is a 191-residue protein sequence, read N- to C-terminus: Cathelicidin-related peptide Oh-Cath (191 aa).

The signal sequence occupies residues 1 to 22; the sequence is MEGFFWKTLLVVGALAIGGTSS. Residues 23–161 constitute a propeptide that is removed on maturation; that stretch reads LPHKPLTYEE…DQPRRVKRFK (139 aa). 2 disulfides stabilise this stretch: C81/C92 and C103/C120. The span at 125–151 shows a compositional bias: acidic residues; sequence EEEEQKQEEGNEEEKEVEKEEKEEDEK. Residues 125-154 form a disordered region; sequence EEEEQKQEEGNEEEKEVEKEEKEEDEKDQP.

This sequence belongs to the cathelicidin family. In terms of tissue distribution, expressed by the venom gland.

The protein resides in the secreted. The protein localises to the target cell membrane. Potent antimicrobial peptide against Gram-negative (MIC=0.25 ug/ml against E.coli ATCC 25922, MIC=0.5 ug/ml against P.aeruginosa) and Gram-positive bacteria (MIC=64 ug/ml against E.faecalis, MIC=64 ug/ml against S.aureus). Adopts an amphipathic alpha helical conformation, that may allow to partition into the target membrane. Low hemolytic activities have been observed on mammalian cells. The protein is Cathelicidin-related peptide Oh-Cath of Ophiophagus hannah (King cobra).